The primary structure comprises 208 residues: UPF0637 protein BCQ_3749 (208 aa).

Belongs to the UPF0637 family.

The chain is UPF0637 protein BCQ_3749 from Bacillus cereus (strain Q1).